A 670-amino-acid polypeptide reads, in one-letter code: Solute carrier organic anion transporter family member 1A5 (670 aa).

The Cytoplasmic portion of the chain corresponds to 1-20 (MGETEKRIATHGVRCFSKIK). Residues 21–40 (MFLLALTCAYVSKSLSGIYM) form a helical membrane-spanning segment. The Extracellular portion of the chain corresponds to 41-59 (NSMLTQIERQFDIPTSIVG). Residues 60–80 (LINGSFEIGNLLLIILVSYFG) form a helical membrane-spanning segment. Residues 81–86 (TKLHRP) are Cytoplasmic-facing. Residues 87-111 (IMIGIGCVIMGLGCFLMSLPHFLMG) traverse the membrane as a helical segment. Residues 112–155 (RYEYETTISPTSNLSSNSFLCMENRTQTLKPTQDPAECVKEMKS) are Extracellular-facing. N-linked (GlcNAc...) asparagine glycosylation is found at Asn-124 and Asn-135. Residues 156 to 184 (LMWIYVLVGNIIRGIGETPIMPLGISYIE) traverse the membrane as a helical segment. At 185–203 (DFAKSENSPLYIGILESGK) the chain is on the cytoplasmic side. Residues 204–224 (MIGPIVGLLLGSFCARIYVDT) form a helical membrane-spanning segment. Topologically, residues 225–242 (GSVNTDDLTITPTDTRWV) are extracellular. Residues 243-267 (GAWWIGFLVCAGVNILTSIPFFFFP) traverse the membrane as a helical segment. At 268–311 (KTLPKEGLQDNVARTENDKEEKHREKAKEENRGITKDFLPFMKS) the chain is on the cytoplasmic side. The chain crosses the membrane as a helical span at residues 312 to 333 (LSCNPIYMLLILTSVLQINAFI). Over 334–353 (NMFTFLPKYLEQQYGKSTSE) the chain is Extracellular. The helical transmembrane segment at 354–377 (VVLLIGVCNLPPICIGYLLIGFIM) threads the bilayer. The Cytoplasmic segment spans residues 378–381 (KKFR). Residues 382–405 (ITVKKAAYMAFCLSLFEYLLSYFH) form a helical membrane-spanning segment. The Extracellular segment spans residues 406–513 (FMISCDNFQV…PECANKLQYF (108 aa)). The Kazal-like domain occupies 433-488 (NKVLADCNTRCSCLTNTWDPVCGDNGLSYMSACLAGCEKSVGMGTHMVFQNCSCIQ). 3 disulfides stabilise this stretch: Cys-439/Cys-469, Cys-445/Cys-465, and Cys-454/Cys-486. N-linked (GlcNAc...) asparagine glycans are attached at residues Asn-483 and Asn-492. A helical membrane pass occupies residues 514–536 (LIMSVIGSFIYSITAIPGYMVLL). Topologically, residues 537–545 (RCIKSEEKS) are cytoplasmic. Residues 546-571 (LGIGLHAFCTRIFAGIPAPIYFGALI) traverse the membrane as a helical segment. The Extracellular segment spans residues 572 to 605 (DRTCLHWGTLKCGEPGACRIYNINNFRRIYLVLP). A helical membrane pass occupies residues 606–623 (AALRGSSYLPAFFILILM). The Cytoplasmic segment spans residues 624-670 (RKFQLPGEMYSSETELADMKQTVKKSECTDVHGIPKVENDGELKTKL).

Belongs to the organo anion transporter (TC 2.A.60) family. In terms of tissue distribution, expressed in brain, choroid plexus and lung, but not in liver or kidney.

It localises to the cell membrane. The protein resides in the basal cell membrane. It catalyses the reaction taurocholate(out) = taurocholate(in). The enzyme catalyses glycocholate(out) = glycocholate(in). It carries out the reaction taurochenodeoxycholate(out) = taurochenodeoxycholate(in). The catalysed reaction is tauroursodeoxycholate(out) = tauroursodeoxycholate(in). It catalyses the reaction 3,3',5'-triiodo-L-thyronine(out) = 3,3',5'-triiodo-L-thyronine(in). The enzyme catalyses L-thyroxine(out) = L-thyroxine(in). It carries out the reaction taurodeoxycholate(out) = taurodeoxycholate(in). The catalysed reaction is glycodeoxycholate(out) = glycodeoxycholate(in). It catalyses the reaction glycochenodeoxycholate(out) = glycochenodeoxycholate(in). The enzyme catalyses glycoursodeoxycholate(out) = glycoursodeoxycholate(in). It carries out the reaction estrone 3-sulfate(out) = estrone 3-sulfate(in). The catalysed reaction is prostaglandin E2(out) = prostaglandin E2(in). It catalyses the reaction substance P(out) = substance P(in). Functionally, na(+)-independent transporter that mediates the cellular uptake of a broad range of organic anions such as the endogenous bile salts cholate and deoxycholate, either in their unconjugated or conjugated forms (taurocholate and glycocholate), estrone 3-sulfate and prostaglandin E2, at the plasma membrane. Responsible for intestinal absorption of bile acids. Capable of thyroid hormone transport (both T3 or 3,3',5'-triiodo-L-thyronine, and T4 or L-tyroxine). Plays roles in blood-brain and -cerebrospinal fluid barrier transport of organic anions and signal mediators, and in hormone uptake by neural cells. May also play a role in the reuptake of neuropeptides such as substance P/TAC1 and vasoactive intestinal peptide/VIP released from retinal neurons. Shows a pH-sensitive substrate specificity which may be ascribed to the protonation state of the binding site and leads to a stimulation of substrate transport in an acidic microenvironment. Hydrogencarbonate/HCO3(-) acts as the probable counteranion that exchanges for organic anions. May contribute to regulate the transport of organic compounds in testis across the blood-testis-barrier. The polypeptide is Solute carrier organic anion transporter family member 1A5 (Slco1a5) (Mus musculus (Mouse)).